The following is a 273-amino-acid chain: Large ribosomal subunit protein uL2 (273 aa).

The disordered stretch occupies residues 228–273 (VDHPHGGGEGKTSGGRHPVTPWGFPTKGKKTRKNKRTSKFIVKKRK). Residues 254-273 (KGKKTRKNKRTSKFIVKKRK) show a composition bias toward basic residues.

This sequence belongs to the universal ribosomal protein uL2 family. As to quaternary structure, part of the 50S ribosomal subunit. Forms a bridge to the 30S subunit in the 70S ribosome.

In terms of biological role, one of the primary rRNA binding proteins. Required for association of the 30S and 50S subunits to form the 70S ribosome, for tRNA binding and peptide bond formation. It has been suggested to have peptidyltransferase activity; this is somewhat controversial. Makes several contacts with the 16S rRNA in the 70S ribosome. The polypeptide is Large ribosomal subunit protein uL2 (Rickettsia massiliae (strain Mtu5)).